Here is a 175-residue protein sequence, read N- to C-terminus: Colicin-B immunity protein (175 aa).

Transmembrane regions (helical) follow at residues 14 to 32 (ILYA…ILIL), 104 to 121 (CFWG…TLFY), and 149 to 168 (IYFT…LLVI).

The protein resides in the cell inner membrane. In terms of biological role, this protein is able to protect a cell, which harbors the plasmid ColB encoding colicin B, against colicin B. The chain is Colicin-B immunity protein (cbi) from Escherichia coli.